The chain runs to 794 residues: Phosphoenolpyruvate synthase (794 aa).

Residue His-422 is the Tele-phosphohistidine intermediate of the active site. Residues Arg-512, Arg-579, Glu-681, Gly-702, Ser-703, Asn-704, and Asp-705 each contribute to the substrate site. Glu-681 provides a ligand contact to Mg(2+). Position 705 (Asp-705) interacts with Mg(2+). Cys-752 serves as the catalytic Proton donor.

This sequence belongs to the PEP-utilizing enzyme family. The cofactor is Mg(2+).

It catalyses the reaction pyruvate + ATP + H2O = phosphoenolpyruvate + AMP + phosphate + 2 H(+). The protein operates within carbohydrate biosynthesis; gluconeogenesis. Catalyzes the phosphorylation of pyruvate to phosphoenolpyruvate. This Neisseria meningitidis serogroup B (strain ATCC BAA-335 / MC58) protein is Phosphoenolpyruvate synthase (ppsA).